We begin with the raw amino-acid sequence, 117 residues long: MDWTWSILFLVAAATGTYSQVQLVQSGHEVKQPGASVKVSCKASGYSFTTYGMNWVPQAPGQGLEWMGWFNTYTGNPTYAQGFTGRFVFSMDTSASTAYLQISSLKAEDMAMYYCAR.

Positions 1–19 are cleaved as a signal peptide; it reads MDWTWSILFLVAAATGTYS. Positions 20-44 are framework-1; it reads QVQLVQSGHEVKQPGASVKVSCKAS. The Ig-like domain maps to 20–117; it reads QVQLVQSGHE…EDMAMYYCAR (98 aa). C41 and C115 form a disulfide bridge. Residues 45–52 form a complementarity-determining-1 region; the sequence is GYSFTTYG. A framework-2 region spans residues 53 to 69; it reads MNWVPQAPGQGLEWMGW. The tract at residues 70–77 is complementarity-determining-2; sequence FNTYTGNP. N-linked (GlcNAc...) asparagine glycosylation is present at N76. The tract at residues 78–115 is framework-3; it reads TYAQGFTGRFVFSMDTSASTAYLQISSLKAEDMAMYYC. Residues 116 to 117 are complementarity-determining-3; that stretch reads AR.

Immunoglobulins are composed of two identical heavy chains and two identical light chains; disulfide-linked.

Its subcellular location is the secreted. It localises to the cell membrane. In terms of biological role, probable non-functional open reading frame (ORF) of V region of the variable domain of immunoglobulin heavy chains. Non-functional ORF generally cannot participate in the synthesis of a productive immunoglobulin chain due to altered V-(D)-J or switch recombination and/or splicing site (at mRNA level) and/or conserved amino acid change (protein level). Immunoglobulins, also known as antibodies, are membrane-bound or secreted glycoproteins produced by B lymphocytes. In the recognition phase of humoral immunity, the membrane-bound immunoglobulins serve as receptors which, upon binding of a specific antigen, trigger the clonal expansion and differentiation of B lymphocytes into immunoglobulins-secreting plasma cells. Secreted immunoglobulins mediate the effector phase of humoral immunity, which results in the elimination of bound antigens. The antigen binding site is formed by the variable domain of one heavy chain, together with that of its associated light chain. Thus, each immunoglobulin has two antigen binding sites with remarkable affinity for a particular antigen. The variable domains are assembled by a process called V-(D)-J rearrangement and can then be subjected to somatic hypermutations which, after exposure to antigen and selection, allow affinity maturation for a particular antigen. The chain is Probable non-functional immunoglobulin heavy variable 7-81 from Homo sapiens (Human).